The chain runs to 320 residues: Putative HTH-type transcriptional regulatory protein VNG_2112C (320 aa).

Positions 132 to 189 (LADRREDERLSLGQLASELGVSRRTVSKYEDGMNASIEVAMRLEDLFGGELTAPVDVM) constitute an HTH cro/C1-type domain. The H-T-H motif DNA-binding region spans 143–162 (LGQLASELGVSRRTVSKYED).

The sequence is that of Putative HTH-type transcriptional regulatory protein VNG_2112C from Halobacterium salinarum (strain ATCC 700922 / JCM 11081 / NRC-1) (Halobacterium halobium).